Here is a 409-residue protein sequence, read N- to C-terminus: Palmitoyltransferase ZDHHC23 (409 aa).

Residues 1–87 are Cytoplasmic-facing; the sequence is MTQKGSMKPV…RIPWLRGAKK (87 aa). A helical transmembrane segment spans residues 88 to 106; the sequence is VNISIIPPLVLLPVFLHVA. The Lumenal portion of the chain corresponds to 107 to 109; the sequence is SWH. Residues 110–132 form a helical membrane-spanning segment; the sequence is FLLGVVVLTSLPVLALWYYYLTH. The Cytoplasmic portion of the chain corresponds to 133–136; sequence RRKE. The chain crosses the membrane as a helical span at residues 137 to 157; that stretch reads QTLFFLSLGLFSLGYMYYVFL. Residues 158 to 165 lie on the Lumenal side of the membrane; sequence QEVVPKGR. A helical transmembrane segment spans residues 166–186; that stretch reads VGPVQLAVLTCGLFLILLALH. Topologically, residues 187–302 are cytoplasmic; sequence RAKKNPGYLS…NSCVGESNHQ (116 aa). Residues 215–255 form a disordered region; it reads RKGQEKTKGFPGADMSGSLNNRTTKDDPKGSSKMPAGSPTK. In terms of domain architecture, DHHC spans 259 to 309; it reads DWCAKCQLVRPARAWHCRICGICVRRMDHHCVWINSCVGESNHQAFILALL. The active-site S-palmitoyl cysteine intermediate is the cysteine 289. Residues 303-323 traverse the membrane as a helical segment; sequence AFILALLIFLLTSVYGITLTL. The Lumenal segment spans residues 324–331; it reads DTICRDRS. The chain crosses the membrane as a helical span at residues 332-352; that stretch reads VFTALFYCPGVYANYSSALSF. Threonine 353 is a topological domain (cytoplasmic). The chain crosses the membrane as a helical span at residues 354–374; it reads CVWYSVIITAGMAYIFLIQLI. Residues 375 to 409 lie on the Lumenal side of the membrane; it reads NISYNVTEREVQQALRQKTGRRLLCGLIVDTGLLG.

Belongs to the DHHC palmitoyltransferase family. As to quaternary structure, interacts with NOS1.

The protein resides in the golgi apparatus membrane. It is found in the golgi apparatus. It localises to the trans-Golgi network membrane. The catalysed reaction is L-cysteinyl-[protein] + hexadecanoyl-CoA = S-hexadecanoyl-L-cysteinyl-[protein] + CoA. Its function is as follows. Palmitoyltransferase that could catalyze the addition of palmitate onto various protein substrates and be involved in a variety of cellular processes. Palmitoyltransferase that mediates palmitoylation of KCNMA1, regulating localization of KCNMA1 to the plasma membrane. May be involved in NOS1 regulation and targeting to the synaptic membrane. The sequence is that of Palmitoyltransferase ZDHHC23 from Homo sapiens (Human).